The following is a 274-amino-acid chain: Thiamine kinase (274 aa).

This sequence belongs to the thiamine kinase family.

The enzyme catalyses thiamine + ATP = thiamine phosphate + ADP + H(+). The protein operates within cofactor biosynthesis; thiamine diphosphate biosynthesis; thiamine phosphate from thiamine: step 1/1. Functionally, catalyzes the ATP-dependent phosphorylation of thiamine to thiamine phosphate. Is involved in thiamine salvage. The chain is Thiamine kinase from Escherichia coli O9:H4 (strain HS).